The chain runs to 759 residues: MELSSLIVPNNKKHFVVVFIGLVLIFKIALITAANEKSQIYTVHLGERQHDDPNIVTESHHDILGPLLGSKKASHESMIYSYRHGFSGFAAKLTSSQARELSGHPDVVRVTRSKNMKLKTTRVSDYLGLTSAAPTGLLHETDMGSEAIVGILDSGIWPDSKSFNDNGLGPIPTRWKGKCVSAEAFNASSCNRKLIGAMYYSKGLESKYNGSFNAAEKGEVMSPLDKIGHGTHCASTAVGSFVPDANVLSLAQGTARGSAPRARIASYKVCWNNEECFTPDIVKAIDHAIRDGVDVLSLSLGSEVPVDFEVDRDDFAIAAFHAVMKGIPVVCAGGNDGPEKETISNVAPWLITVAATTMDREYFTPITLGNNITLLGQEGLYIGEEVGFTDLLFYDDVTREDMEAGKATGKILLFFQRANFEDDFAAYAKSKGAVGVIIATQPTDSIDASTVDIAIAYVDNELGMDILLYIQTTKSPIAKISPTKTFVGRPLATKVARFSSRGPNSLSPVILKPDIAAPGSGILAAVPTGGGYDFMSGTSMSTPVVSGIVALLRKKRPDWSPAAIRSALVTTALQTDPSGEPIAAEGSPRKLADPFDYGGGLVNPVKVADPGLVYDMGHDEYVHYLCSAGYDNTSISKLLGEIYTCPTPIPSMLDVNMPSITIPYLSEEITITRTVTNVGPVGSVYKAVIQAPQGINLQVSPETLEFGSNTNKTTFTVKVSTTHRANTDYLFGSLTWADNEGHNVRIPLSVRTRVFNFKI.

Residues M1–A33 form the signal peptide. Residues A34 to K119 constitute a propeptide, activation peptide. The Inhibitor I9 domain occupies Y41–L118. One can recognise a Peptidase S8 domain in the interval S124–A608. D153 acts as the Charge relay system in catalysis. N-linked (GlcNAc...) asparagine glycosylation is found at N186 and N209. H229 functions as the Charge relay system in the catalytic mechanism. N371 carries N-linked (GlcNAc...) asparagine glycosylation. The Charge relay system role is filled by S539. N-linked (GlcNAc...) asparagine glycans are attached at residues N632 and N711.

This sequence belongs to the peptidase S8 family.

The protein resides in the secreted. The polypeptide is Subtilisin-like protease SBT3.16 (Arabidopsis thaliana (Mouse-ear cress)).